Here is a 937-residue protein sequence, read N- to C-terminus: Beta-mannosidase A (937 aa).

A signal peptide spans 1 to 23 (MRALPTTATTLLGVLFFPSASRS). N42, N82, N250, N285, N319, N329, and N350 each carry an N-linked (GlcNAc...) asparagine glycan. The active-site Proton donor is the E482. 4 N-linked (GlcNAc...) asparagine glycosylation sites follow: N553, N612, N743, and N796.

It belongs to the glycosyl hydrolase 2 family. Beta-mannosidase A subfamily. Homodimer. In terms of processing, N-glycosylated.

Its subcellular location is the secreted. It carries out the reaction Hydrolysis of terminal, non-reducing beta-D-mannose residues in beta-D-mannosides.. The protein operates within glycan metabolism; N-glycan degradation. In terms of biological role, exoglycosidase that cleaves the single beta-linked mannose residue from the non-reducing end of beta-mannosidic oligosaccharides of various complexity and length. Involved in the degradation of polymeric mannan and galactomannan. Releases the terminal mannose residue from mannotriose and is somewaht less active on other mannooligosaccharides. The polypeptide is Beta-mannosidase A (mndA) (Aspergillus aculeatus).